Reading from the N-terminus, the 95-residue chain is Co-chaperonin GroES (95 aa).

This sequence belongs to the GroES chaperonin family. Heptamer of 7 subunits arranged in a ring. Interacts with the chaperonin GroEL.

It is found in the cytoplasm. Its function is as follows. Together with the chaperonin GroEL, plays an essential role in assisting protein folding. The GroEL-GroES system forms a nano-cage that allows encapsulation of the non-native substrate proteins and provides a physical environment optimized to promote and accelerate protein folding. GroES binds to the apical surface of the GroEL ring, thereby capping the opening of the GroEL channel. The protein is Co-chaperonin GroES of Nitratidesulfovibrio vulgaris (strain DSM 19637 / Miyazaki F) (Desulfovibrio vulgaris).